A 292-amino-acid chain; its full sequence is Ribosomal RNA small subunit methyltransferase A (292 aa).

S-adenosyl-L-methionine is bound by residues asparagine 28, leucine 30, glycine 55, glutamate 76, aspartate 101, and asparagine 126.

Belongs to the class I-like SAM-binding methyltransferase superfamily. rRNA adenine N(6)-methyltransferase family. RsmA subfamily.

The protein resides in the cytoplasm. It catalyses the reaction adenosine(1518)/adenosine(1519) in 16S rRNA + 4 S-adenosyl-L-methionine = N(6)-dimethyladenosine(1518)/N(6)-dimethyladenosine(1519) in 16S rRNA + 4 S-adenosyl-L-homocysteine + 4 H(+). Functionally, specifically dimethylates two adjacent adenosines (A1518 and A1519) in the loop of a conserved hairpin near the 3'-end of 16S rRNA in the 30S particle. May play a critical role in biogenesis of 30S subunits. The protein is Ribosomal RNA small subunit methyltransferase A of Bacillus cytotoxicus (strain DSM 22905 / CIP 110041 / 391-98 / NVH 391-98).